The following is a 155-amino-acid chain: Probable ribosome biogenesis protein RLP24 (155 aa).

The protein belongs to the eukaryotic ribosomal protein eL24 family.

The protein is Probable ribosome biogenesis protein RLP24 (RPL24) of Encephalitozoon cuniculi (strain GB-M1) (Microsporidian parasite).